A 120-amino-acid chain; its full sequence is Large ribosomal subunit protein bL17 (120 aa).

This sequence belongs to the bacterial ribosomal protein bL17 family. Part of the 50S ribosomal subunit. Contacts protein L32.

This chain is Large ribosomal subunit protein bL17, found in Bacillus subtilis (strain 168).